The following is a 623-amino-acid chain: Membrane protein insertase YidC (623 aa).

Transmembrane regions (helical) follow at residues Leu8–Pro28, Met379–Tyr399, Leu449–Ile469, Thr507–Leu527, and Ile543–Val563. Over residues Lys601–Pro617 the composition is skewed to low complexity. A disordered region spans residues Lys601–Pro623.

Belongs to the OXA1/ALB3/YidC family. Type 1 subfamily. As to quaternary structure, interacts with the Sec translocase complex via SecD. Specifically interacts with transmembrane segments of nascent integral membrane proteins during membrane integration.

The protein localises to the cell inner membrane. Required for the insertion and/or proper folding and/or complex formation of integral membrane proteins into the membrane. Involved in integration of membrane proteins that insert both dependently and independently of the Sec translocase complex, as well as at least some lipoproteins. Aids folding of multispanning membrane proteins. The sequence is that of Membrane protein insertase YidC from Cereibacter sphaeroides (strain ATCC 17023 / DSM 158 / JCM 6121 / CCUG 31486 / LMG 2827 / NBRC 12203 / NCIMB 8253 / ATH 2.4.1.) (Rhodobacter sphaeroides).